The sequence spans 176 residues: ATP-dependent protease subunit HslV (176 aa).

Thr-2 is a catalytic residue. Positions 157, 160, and 163 each coordinate Na(+).

This sequence belongs to the peptidase T1B family. HslV subfamily. In terms of assembly, a double ring-shaped homohexamer of HslV is capped on each side by a ring-shaped HslU homohexamer. The assembly of the HslU/HslV complex is dependent on binding of ATP.

The protein localises to the cytoplasm. The catalysed reaction is ATP-dependent cleavage of peptide bonds with broad specificity.. With respect to regulation, allosterically activated by HslU binding. Functionally, protease subunit of a proteasome-like degradation complex believed to be a general protein degrading machinery. The protein is ATP-dependent protease subunit HslV of Buchnera aphidicola subsp. Schizaphis graminum (strain Sg).